The chain runs to 78 residues: Translation initiation factor IF-1, plastid (78 aa).

The S1-like domain maps to 1–72 (MKKQDLIDME…TKGRITYRLR (72 aa)).

Belongs to the IF-1 family. Component of the 30S ribosomal translation pre-initiation complex which assembles on the 30S ribosome in the order IF-2 and IF-3, IF-1 and N-formylmethionyl-tRNA(fMet); mRNA recruitment can occur at any time during PIC assembly.

The protein localises to the plastid. Its function is as follows. One of the essential components for the initiation of protein synthesis. Stabilizes the binding of IF-2 and IF-3 on the 30S subunit to which N-formylmethionyl-tRNA(fMet) subsequently binds. Helps modulate mRNA selection, yielding the 30S pre-initiation complex (PIC). Upon addition of the 50S ribosomal subunit IF-1, IF-2 and IF-3 are released leaving the mature 70S translation initiation complex. The protein is Translation initiation factor IF-1, plastid of Aneura mirabilis (Parasitic liverwort).